The primary structure comprises 554 residues: ATP synthase subunit alpha (554 aa).

173-180 (GDRQTGKT) lines the ATP pocket. The interval 531–554 (SHLAAEKVRKHVPPSKPTTQRTAG) is disordered.

Belongs to the ATPase alpha/beta chains family. In terms of assembly, F-type ATPases have 2 components, CF(1) - the catalytic core - and CF(0) - the membrane proton channel. CF(1) has five subunits: alpha(3), beta(3), gamma(1), delta(1), epsilon(1). CF(0) has three main subunits: a(1), b(2) and c(9-12). The alpha and beta chains form an alternating ring which encloses part of the gamma chain. CF(1) is attached to CF(0) by a central stalk formed by the gamma and epsilon chains, while a peripheral stalk is formed by the delta and b chains.

It localises to the cell membrane. The catalysed reaction is ATP + H2O + 4 H(+)(in) = ADP + phosphate + 5 H(+)(out). Functionally, produces ATP from ADP in the presence of a proton gradient across the membrane. The alpha chain is a regulatory subunit. The protein is ATP synthase subunit alpha of Acidothermus cellulolyticus (strain ATCC 43068 / DSM 8971 / 11B).